The primary structure comprises 216 residues: MVVKIVEAYEKVDQVKILFKEYVEWLNIDLSFQNFSEEFNSLPGKYSIENDGRLYIAYSDESLAGCVGLRKINIEINENKNNQQVDHDETSTIIIKKEQQQQQQQQQQQQQQQQQQQQQQQQQQQQQQQQQQQQKICEMKRLFVKSEFRGLKIGKLLVERLINDAKEQNYDYMVLDTLKTLTTAISIYKSFGFIEFDPYYYNPNSNDVTFLKLKLK.

The N-acetyltransferase domain maps to 1–216 (MVVKIVEAYE…DVTFLKLKLK (216 aa)).

The protein belongs to the acetyltransferase family.

This is an uncharacterized protein from Dictyostelium discoideum (Social amoeba).